The following is a 128-amino-acid chain: Large ribosomal subunit protein bL20c (128 aa).

It belongs to the bacterial ribosomal protein bL20 family.

Its subcellular location is the plastid. It is found in the chloroplast. Functionally, binds directly to 23S ribosomal RNA and is necessary for the in vitro assembly process of the 50S ribosomal subunit. It is not involved in the protein synthesizing functions of that subunit. This Gossypium barbadense (Sea Island cotton) protein is Large ribosomal subunit protein bL20c.